The primary structure comprises 389 residues: Chalcone synthase E (389 aa).

Residue C164 is part of the active site.

Belongs to the thiolase-like superfamily. Chalcone/stilbene synthases family.

It catalyses the reaction (E)-4-coumaroyl-CoA + 3 malonyl-CoA + 3 H(+) = 2',4,4',6'-tetrahydroxychalcone + 3 CO2 + 4 CoA. Its pathway is secondary metabolite biosynthesis; flavonoid biosynthesis. Functionally, the primary product of this enzyme is 4,2',4',6'-tetrahydroxychalcone (also termed naringenin-chalcone or chalcone) which can under specific conditions spontaneously isomerize into naringenin. The sequence is that of Chalcone synthase E (CHSE) from Ipomoea purpurea (Common morning glory).